The chain runs to 531 residues: Anthranilate synthase component 1 (531 aa).

Residues Ser56 and Pro284–Met286 contribute to the L-tryptophan site. Gly324 to Ser325 is a chorismate binding site. Glu351 contacts Mg(2+). Chorismate-binding positions include Tyr439, Arg459, Gly473–Gly475, and Gly475. A Mg(2+)-binding site is contributed by Glu488. The tract at residues Leu506 to Ser531 is disordered. The segment covering Pro511 to Ser531 has biased composition (low complexity).

It belongs to the anthranilate synthase component I family. In terms of assembly, heterotetramer consisting of two non-identical subunits: a beta subunit (TrpG) and a large alpha subunit (TrpE). Mg(2+) is required as a cofactor.

It catalyses the reaction chorismate + L-glutamine = anthranilate + pyruvate + L-glutamate + H(+). Its pathway is amino-acid biosynthesis; L-tryptophan biosynthesis; L-tryptophan from chorismate: step 1/5. With respect to regulation, feedback inhibited by tryptophan. Functionally, part of a heterotetrameric complex that catalyzes the two-step biosynthesis of anthranilate, an intermediate in the biosynthesis of L-tryptophan. In the first step, the glutamine-binding beta subunit (TrpG) of anthranilate synthase (AS) provides the glutamine amidotransferase activity which generates ammonia as a substrate that, along with chorismate, is used in the second step, catalyzed by the large alpha subunit of AS (TrpE) to produce anthranilate. In the absence of TrpG, TrpE can synthesize anthranilate directly from chorismate and high concentrations of ammonia. This is Anthranilate synthase component 1 (trpE) from Arthrobacter globiformis.